A 691-amino-acid chain; its full sequence is Seven transmembrane domain-containing tyrosine-protein kinase 1 (691 aa).

Residues 1-33 (MDTSCVSINQCGFCTYLFNRSIPLAGEGDGAIM) are Extracellular-facing. Residues 34–54 (FNTMVDSMALGYIFSALYLLF) traverse the membrane as a helical segment. Over 55-126 (RLQRSYTYLQ…PRIINSTYFK (72 aa)) the chain is Cytoplasmic. Residues 127 to 144 (YTLFVSLWLAFEGLLLLF) form a helical membrane-spanning segment. At 145 to 153 (LPPNSLAYP) the chain is on the extracellular side. A helical transmembrane segment spans residues 154-176 (AFVIIVGTGHIVTDNWVLVFLYG). The Cytoplasmic segment spans residues 177–186 (KEDDRFSARR). Residues 187 to 207 (SFYSCTLLYLIICCTTLASFF) form a helical membrane-spanning segment. The Extracellular portion of the chain corresponds to 208–227 (DDQTMCKKNDCQTFMFQDEY). The helical transmembrane segment at 228 to 248 (TSLAITVASLVVYTIVLGMTI) threads the bilayer. At 249 to 258 (KRSFLRPTGR) the chain is on the cytoplasmic side. A helical transmembrane segment spans residues 259-279 (IWLLFLMGYNCISSVGALLNI). The Extracellular portion of the chain corresponds to 280 to 284 (LDVDA). Residues 285–305 (GYCFLGIAAIIYSFSYGPLLF) form a helical membrane-spanning segment. At 306–691 (RTCGNDTNLL…GAEEFHYIDG (386 aa)) the chain is on the cytoplasmic side. A Protein kinase domain is found at 363-634 (FKFGQVIGEG…ANVPISNTYV (272 aa)). ATP-binding positions include 369-377 (IGEGYFGEV) and Lys390. Catalysis depends on Asp493, which acts as the Proton acceptor.

The protein belongs to the protein kinase superfamily. TKL Tyr protein kinase family.

Its subcellular location is the membrane. The enzyme catalyses L-tyrosyl-[protein] + ATP = O-phospho-L-tyrosyl-[protein] + ADP + H(+). The protein is Seven transmembrane domain-containing tyrosine-protein kinase 1 (7tmk1) of Dictyostelium discoideum (Social amoeba).